Here is a 248-residue protein sequence, read N- to C-terminus: Adenosylcobinamide-GDP ribazoletransferase (248 aa).

The next 8 helical transmembrane spans lie at 24-44 (EVNL…IGAW), 47-67 (LVFT…AGLF), 70-90 (IIIT…GLFS), 106-126 (VGAN…ALFL), 134-154 (IGWL…LLFA), 165-185 (LGSI…LFVL), 186-206 (FILG…VILF), and 228-248 (AGGQ…WGLI).

It belongs to the CobS family. Mg(2+) is required as a cofactor.

The protein resides in the cell membrane. It catalyses the reaction alpha-ribazole + adenosylcob(III)inamide-GDP = adenosylcob(III)alamin + GMP + H(+). The enzyme catalyses alpha-ribazole 5'-phosphate + adenosylcob(III)inamide-GDP = adenosylcob(III)alamin 5'-phosphate + GMP + H(+). Its pathway is cofactor biosynthesis; adenosylcobalamin biosynthesis; adenosylcobalamin from cob(II)yrinate a,c-diamide: step 7/7. Joins adenosylcobinamide-GDP and alpha-ribazole to generate adenosylcobalamin (Ado-cobalamin). Also synthesizes adenosylcobalamin 5'-phosphate from adenosylcobinamide-GDP and alpha-ribazole 5'-phosphate. The chain is Adenosylcobinamide-GDP ribazoletransferase from Listeria welshimeri serovar 6b (strain ATCC 35897 / DSM 20650 / CCUG 15529 / CIP 8149 / NCTC 11857 / SLCC 5334 / V8).